Consider the following 150-residue polypeptide: uncharacterized protein (150 aa).

The region spanning 4–149 (IQIRNYQPGD…TNFYMRYKPQ (146 aa)) is the N-acetyltransferase domain.

Belongs to the acetyltransferase family.

This is an uncharacterized protein from Escherichia coli (strain K12).